The following is a 409-amino-acid chain: Ligand-gated cation channel ZACN (409 aa).

The signal sequence occupies residues 1–18 (MAPRLLLLLLAFLRLGTT). Over 19–233 (GPLVQGRGFR…LRLQNTALKA (215 aa)) the chain is Extracellular. 2 N-linked (GlcNAc...) asparagine glycosylation sites follow: Asn55 and Asn99. A disulfide bridge connects residues Cys157 and Cys171. A helical membrane pass occupies residues 234-254 (IIALLVPGEALLLADMCGGLL). At 255-265 (PLRATERIAYK) the chain is on the cytoplasmic side. The chain crosses the membrane as a helical span at residues 266–286 (VTLLLGYLVFHSSLVQALPSS). Residues 287–296 (SSCNPLLIYY) lie on the Extracellular side of the membrane. The chain crosses the membrane as a helical span at residues 297–317 (FTVLLLLLFISTMETVLLAAL). The Cytoplasmic segment spans residues 318 to 365 (QARGHLSARSSPIPTPRGEQQDHGDLGPHPEEAPGVKESRSWAEAADH). Positions 325-354 (ARSSPIPTPRGEQQDHGDLGPHPEEAPGVK) are disordered. Over residues 336–354 (EQQDHGDLGPHPEEAPGVK) the composition is skewed to basic and acidic residues. Residues 366–386 (IFFLVYVVGVVCSQFFFIGFW) form a helical membrane-spanning segment. The Extracellular portion of the chain corresponds to 387 to 409 (MWATCKSDPAPGEAIPHGGQPRL).

The protein belongs to the ligand-gated ion channel (TC 1.A.9) family. Post-translationally, glycosylated.

The protein localises to the cell membrane. The catalysed reaction is Na(+)(in) = Na(+)(out). It catalyses the reaction K(+)(in) = K(+)(out). In terms of biological role, ligand-gated cation channel that allows the movement of sodium and potassium monoatomic cations across cell membranes when activated by zinc (Zn2+), copper (Cu2+), and changes in pH. Could also transport cesium. The sequence is that of Ligand-gated cation channel ZACN from Canis lupus familiaris (Dog).